A 68-amino-acid chain; its full sequence is Intracellular calcium channel modulator CCP-Ts (68 aa).

The signal sequence occupies residues 1–23 (MNPKLLIVIGLLLATGVCSFAKA). Cystine bridges form between Cys33–Cys47, Cys40–Cys53, and Cys46–Cys62.

It belongs to the scorpion calcin-like family. As to expression, expressed by the venom gland. In intravenously injected mice, the labeled toxin has preference for heart, liver and lungs.

It localises to the secreted. The protein resides in the nucleus. Functionally, cell penetrating peptide (CPP) that increases intracellular calcium release through the activation of nuclear inositol 1,4,5-trisphosphate receptors (ITPR) of cardiomyocytes, thereby causing an increase in the contraction frequency of these cells. In vivo, this toxin is not lethal to mice, hovewer anti-CPP serum reduces venom lethality, suggesting that this toxin is lethal when it acts in synergy with other venom components. This chain is Intracellular calcium channel modulator CCP-Ts, found in Tityus serrulatus (Brazilian scorpion).